Here is a 455-residue protein sequence, read N- to C-terminus: Anaerobic glycerol-3-phosphate dehydrogenase subunit B (455 aa).

It belongs to the anaerobic G-3-P dehydrogenase subunit B family. In terms of assembly, composed of a catalytic GlpA/B dimer and of membrane bound GlpC. FMN serves as cofactor.

The enzyme catalyses a quinone + sn-glycerol 3-phosphate = dihydroxyacetone phosphate + a quinol. The protein operates within polyol metabolism; glycerol degradation via glycerol kinase pathway; glycerone phosphate from sn-glycerol 3-phosphate (anaerobic route): step 1/1. Functionally, conversion of glycerol 3-phosphate to dihydroxyacetone. Uses fumarate or nitrate as electron acceptor. This Aliivibrio fischeri (strain ATCC 700601 / ES114) (Vibrio fischeri) protein is Anaerobic glycerol-3-phosphate dehydrogenase subunit B.